The following is a 325-amino-acid chain: Phosphate acyltransferase (325 aa).

The protein belongs to the PlsX family. Homodimer. Probably interacts with PlsY.

The protein resides in the cytoplasm. The enzyme catalyses a fatty acyl-[ACP] + phosphate = an acyl phosphate + holo-[ACP]. It participates in lipid metabolism; phospholipid metabolism. Functionally, catalyzes the reversible formation of acyl-phosphate (acyl-PO(4)) from acyl-[acyl-carrier-protein] (acyl-ACP). This enzyme utilizes acyl-ACP as fatty acyl donor, but not acyl-CoA. The sequence is that of Phosphate acyltransferase from Mycoplasmopsis pulmonis (strain UAB CTIP) (Mycoplasma pulmonis).